The following is a 163-amino-acid chain: Transcription elongation factor GreA (163 aa).

The stretch at 49–80 (ENAEYDAARDRQSEVERRILELERILENAEII) forms a coiled coil.

It belongs to the GreA/GreB family.

In terms of biological role, necessary for efficient RNA polymerase transcription elongation past template-encoded arresting sites. The arresting sites in DNA have the property of trapping a certain fraction of elongating RNA polymerases that pass through, resulting in locked ternary complexes. Cleavage of the nascent transcript by cleavage factors such as GreA or GreB allows the resumption of elongation from the new 3'terminus. GreA releases sequences of 2 to 3 nucleotides. The polypeptide is Transcription elongation factor GreA (Mycoplasmopsis agalactiae (strain NCTC 10123 / CIP 59.7 / PG2) (Mycoplasma agalactiae)).